A 247-amino-acid chain; its full sequence is tRNA pseudouridine synthase A (247 aa).

D58 (nucleophile) is an active-site residue. Y116 contributes to the substrate binding site.

Belongs to the tRNA pseudouridine synthase TruA family. As to quaternary structure, homodimer.

It catalyses the reaction uridine(38/39/40) in tRNA = pseudouridine(38/39/40) in tRNA. In terms of biological role, formation of pseudouridine at positions 38, 39 and 40 in the anticodon stem and loop of transfer RNAs. This chain is tRNA pseudouridine synthase A, found in Hydrogenobaculum sp. (strain Y04AAS1).